The chain runs to 225 residues: Phosphoserine phosphatase (225 aa).

At M1 the chain carries N-acetylmethionine. The Nucleophile role is filled by D20. D20 and D22 together coordinate Mg(2+). Residue 20–22 (DVD) participates in L-serine binding. D22 serves as the catalytic Proton donor. M52 contacts O-phospho-L-serine. G53 contributes to the phosphate binding site. L-serine contacts are provided by residues 109–111 (SGG) and K158. O-phospho-L-serine is bound by residues 109–111 (SGG) and K158. Mg(2+) is bound at residue D179. T182 lines the O-phospho-L-serine pocket. T182 provides a ligand contact to phosphate.

This sequence belongs to the HAD-like hydrolase superfamily. SerB family. As to quaternary structure, homodimer. The cofactor is Mg(2+).

The protein resides in the cytoplasm. It is found in the cytosol. The catalysed reaction is O-phospho-L-serine + H2O = L-serine + phosphate. It catalyses the reaction O-phospho-D-serine + H2O = D-serine + phosphate. The protein operates within amino-acid biosynthesis; L-serine biosynthesis; L-serine from 3-phospho-D-glycerate: step 3/3. Inhibited by calcium ions. Its function is as follows. Catalyzes the last irreversible step in the biosynthesis of L-serine from carbohydrates, the dephosphorylation of O-phospho-L-serine to L-serine. L-serine can then be used in protein synthesis, to produce other amino acids, in nucleotide metabolism or in glutathione synthesis, or can be racemized to D-serine, a neuromodulator. May also act on O-phospho-D-serine. The sequence is that of Phosphoserine phosphatase from Homo sapiens (Human).